The sequence spans 74 residues: WAP four-disulfide core domain protein 18 (74 aa).

The signal sequence occupies residues 1 to 24; the sequence is MKTATVFVLVALIFMTMTTAWALS. The 48-residue stretch at 26-73 folds into the WAP domain; the sequence is PKEKPGACPKPPPRSFGTCDERCTGDGSCSGNMKCCSNGCGHACKPPV.

The protein localises to the secreted. Could have proteinase inhibiting capacity. This chain is WAP four-disulfide core domain protein 18 (WFDC18), found in Bos taurus (Bovine).